A 485-amino-acid polypeptide reads, in one-letter code: NADH-quinone oxidoreductase subunit N (485 aa).

The next 14 helical transmembrane spans lie at A10–W30, F35–V55, F75–L95, E104–H124, L125–Y145, Y159–A179, I203–F223, P235–M255, L271–Q291, L297–Q317, G327–M347, A374–G394, W408–R427, and A449–I469.

It belongs to the complex I subunit 2 family. NDH-1 is composed of 13 different subunits. Subunits NuoA, H, J, K, L, M, N constitute the membrane sector of the complex.

Its subcellular location is the cell inner membrane. The enzyme catalyses a quinone + NADH + 5 H(+)(in) = a quinol + NAD(+) + 4 H(+)(out). In terms of biological role, NDH-1 shuttles electrons from NADH, via FMN and iron-sulfur (Fe-S) centers, to quinones in the respiratory chain. The immediate electron acceptor for the enzyme in this species is believed to be ubiquinone. Couples the redox reaction to proton translocation (for every two electrons transferred, four hydrogen ions are translocated across the cytoplasmic membrane), and thus conserves the redox energy in a proton gradient. The protein is NADH-quinone oxidoreductase subunit N of Yersinia enterocolitica serotype O:8 / biotype 1B (strain NCTC 13174 / 8081).